Here is a 310-residue protein sequence, read N- to C-terminus: Olfactory receptor 5H14 (310 aa).

Topologically, residues 1 to 28 (MEEENATLLTEFVLTGFLYQPQWKIPLF) are extracellular. A glycan (N-linked (GlcNAc...) asparagine) is linked at asparagine 5. The chain crosses the membrane as a helical span at residues 29–49 (LAFLVIYLITIMGNLGLIAVI). The Cytoplasmic segment spans residues 50 to 56 (WKDPHLH). A helical membrane pass occupies residues 57 to 77 (IPMYLLLGNLAFVDALLSSSV). Over 78 to 98 (TLKMLINFLAKSKMISLSECK) the chain is Extracellular. An intrachain disulfide couples cysteine 97 to cysteine 179. A helical transmembrane segment spans residues 99-119 (IQLFSFAISVTTECFLLATMA). Residues 120–143 (YDRYVAICKPLLYPAIMTNGLCIR) are Cytoplasmic-facing. The chain crosses the membrane as a helical span at residues 144–164 (LLILSYVGGLLHALIHEGFLF). Residues 165–195 (RLTFCNSNIIQHFYCDIIPLLKISYTDSSIN) are Extracellular-facing. The helical transmembrane segment at 196–216 (FLMVFIFAGSIQVFTIGTVLI) threads the bilayer. The Cytoplasmic segment spans residues 217–240 (SYIFVLYTILKKKSVKGMRKAFST). A helical transmembrane segment spans residues 241 to 261 (CGAHLLSVSLYYGPLAFMYMG). Over 262–271 (SASPQADDQD) the chain is Extracellular. A helical transmembrane segment spans residues 272-292 (MMESLFYTVIVPLLNPMIYSL). Residues 293–310 (RNKQVIASFTKMFKRNDV) are Cytoplasmic-facing.

This sequence belongs to the G-protein coupled receptor 1 family.

It is found in the cell membrane. Odorant receptor. This is Olfactory receptor 5H14 (OR5H14) from Homo sapiens (Human).